The sequence spans 138 residues: Protein FAM136A (138 aa).

At Ala-2 the chain carries N-acetylalanine. Phosphothreonine occurs at positions 124 and 126.

It belongs to the FAM136 family.

The chain is Protein FAM136A (FAM136A) from Bos taurus (Bovine).